Reading from the N-terminus, the 1430-residue chain is Caskin-1 (1430 aa).

6 ANK repeats span residues 48-77 (DGFS…AVDI), 81-110 (KGMR…AVNV), 114-143 (EGHI…NPCI), 147-176 (SGKT…CAAL), 188-217 (NGTS…DINR), and 220-249 (KSGT…NAQV). Tyr-253 is subject to Phosphotyrosine. An SH3 domain is found at 281 to 347 (SAALQVRATK…PSSLGEAIVK (67 aa)). The interval 348 to 372 (RAGSRTGSEPSPPQGGGSLGPSAPP) is disordered. Phosphoserine is present on Ser-358. The CASK-binding stretch occupies residues 375-471 (IWVLRKPFAG…PKKLESSSAS (97 aa)). Arg-398 carries the post-translational modification Omega-N-methylarginine. Residues 421 to 430 (QKSVSESSPG) are compositionally biased toward polar residues. Residues 421–472 (QKSVSESSPGDSPVKPPEGSSGAARSQPPAAHAGQVYGEQPPKKLESSSASE) are disordered. A phosphoserine mark is found at Ser-423 and Ser-432. SAM domains follow at residues 474–537 (KSAE…LNIP) and 543–607 (HKPA…LAEL). A phosphoserine mark is found at Ser-635 and Ser-648. Over residues 667-679 (LSGPAEAGAAAAE) the composition is skewed to low complexity. Disordered stretches follow at residues 667–1001 (LSGP…SAGS), 1015–1040 (GGGG…DPGR), 1055–1371 (GPDG…RQKL), and 1388–1407 (KIRQ…EKST). The segment covering 683–711 (NHLPATPRTTSRQESSLSGRARHMSSSQE) has biased composition (polar residues). Phosphoserine is present on residues Ser-722 and Ser-727. At Thr-740 the chain carries Phosphothreonine. The residue at position 790 (Ser-790) is a Phosphoserine. Over residues 847 to 859 (PPAPGPVPPPVPA) the composition is skewed to pro residues. Phosphoserine is present on residues Ser-890, Ser-892, and Ser-988. Positions 1027-1036 (GHPTPRPASP) are enriched in pro residues. Thr-1066 carries the phosphothreonine modification. Phosphoserine is present on Ser-1068. Basic and acidic residues predominate over residues 1147–1159 (DTVKRRPKAKEPD). The segment covering 1190–1214 (PELPPPPPPAEPPPTDLMPLPPLPL) has biased composition (pro residues). At Ser-1258 the chain carries Phosphoserine. Thr-1267 is modified (phosphothreonine). The span at 1267–1282 (TPPPVSPKPPPPPTAP) shows a compositional bias: pro residues. Low complexity-rich tracts occupy residues 1283-1298 (KPAK…SATP), 1308-1326 (PPAA…SASP), and 1344-1358 (PRAA…PVAS). The residue at position 1362 (Ser-1362) is a Phosphoserine. The segment covering 1388–1406 (KIRQEDGQGPRPSSIEEKS) has biased composition (basic and acidic residues).

Polymerizes, via the tandem SAM domains, to form long, 8 nM wide fibers, upon which other proteins can assemble. Binds the CaM kinase domain of CASK. Forms a ternary complex with CASK and LIN7A, LIN7B or LIN7C. Competes with APBA1 that forms a similar complex with CASK and LIN7 proteins. The tripartite complex CASKIN1/CASK/LIN7(A/B/C) binds the cytoplasmic tail of NRXN1. Expressed in brain. Localized primarily to the neuropil and enriched in synaptic areas (at protein level).

The protein localises to the cytoplasm. Its function is as follows. May link the scaffolding protein CASK to downstream intracellular effectors. The chain is Caskin-1 (Caskin1) from Rattus norvegicus (Rat).